The following is a 78-amino-acid chain: Esculentin-2Vb (78 aa).

The signal sequence occupies residues 1–22 (MFTMKKSLLLLFFLGTISLSLC). Positions 23–39 (EEERGADEEEGDGEKLM) are excised as a propeptide. A disulfide bridge links C72 with C78.

As to expression, expressed by the skin glands.

It localises to the secreted. Functionally, antimicrobial peptide. The protein is Esculentin-2Vb of Odorrana versabilis (Chinese bamboo leaf odorous frog).